The chain runs to 338 residues: Phenylalanine--tRNA ligase alpha subunit (338 aa).

Position 252 (Glu-252) interacts with Mg(2+).

This sequence belongs to the class-II aminoacyl-tRNA synthetase family. Phe-tRNA synthetase alpha subunit type 1 subfamily. As to quaternary structure, tetramer of two alpha and two beta subunits. The cofactor is Mg(2+).

The protein resides in the cytoplasm. It catalyses the reaction tRNA(Phe) + L-phenylalanine + ATP = L-phenylalanyl-tRNA(Phe) + AMP + diphosphate + H(+). This is Phenylalanine--tRNA ligase alpha subunit from Pseudomonas paraeruginosa (strain DSM 24068 / PA7) (Pseudomonas aeruginosa (strain PA7)).